A 241-amino-acid chain; its full sequence is MIDLTGKTSLITGASSGIGSAIARLLHKLGSKVIISGSNEEKLKSLGNALKDNYTIEVCNLANKEECSNLISKTSNLDILVCNAGITSDTLAIRMKDQDFDKVIDINLKANFILNREAIKKMIQKRYGRIINISSIVGIAGNPGQANYCASKAGLIGMTKSLSYEVATRGITVNAVAPGFIKSDMTDKLNEKQREAIVQKIPLGTYGIPEDVAYAVAFLASNNASYITGQTLHVNGGMLMV.

NADP(+) contacts are provided by residues 13-16 (GASS), Ser38, 57-58 (EV), and Asn83. Ser135 is a substrate binding site. Catalysis depends on Tyr148, which acts as the Proton acceptor. NADP(+)-binding positions include 148–152 (YCASK) and Ile181.

The protein belongs to the short-chain dehydrogenases/reductases (SDR) family. In terms of assembly, homotetramer.

The catalysed reaction is a (3R)-hydroxyacyl-[ACP] + NADP(+) = a 3-oxoacyl-[ACP] + NADPH + H(+). Its pathway is lipid metabolism; fatty acid biosynthesis. Its function is as follows. Catalyzes the NADPH-dependent reduction of beta-ketoacyl-ACP substrates to beta-hydroxyacyl-ACP products, the first reductive step in the elongation cycle of fatty acid biosynthesis. This is 3-oxoacyl-[acyl-carrier-protein] reductase FabG (fabG) from Rickettsia prowazekii (strain Madrid E).